The chain runs to 459 residues: Heat stress transcription factor A-4d (459 aa).

Residues 127–189 adopt a coiled-coil conformation; sequence AESERRELEE…QKNIVASLCE (63 aa). The segment at 141–191 is hydrophobic repeat HR-A/B; that stretch reads LKYEKSILVADLQRQNQQQYVINWQMQAMEGRLVAMEQRQKNIVASLCEML. Positions 209–213 match the Nuclear localization signal motif; that stretch reads SKKRR. Positions 364–388 are enriched in polar residues; it reads YPTQADVNSEIASSTDTSQDGTSET. A disordered region spans residues 364-398; it reads YPTQADVNSEIASSTDTSQDGTSETEASHGPTNDV. Positions 397-406 match the AHA motif; the sequence is DVFWERFLTE.

Belongs to the HSF family. Class A subfamily. As to quaternary structure, homotrimer. In terms of processing, exhibits temperature-dependent phosphorylation.

Its subcellular location is the nucleus. Functionally, transcriptional regulator that specifically binds DNA of heat shock promoter elements (HSE). In Oryza sativa subsp. japonica (Rice), this protein is Heat stress transcription factor A-4d (HSFA4D).